The following is a 200-amino-acid chain: Small ribosomal subunit protein uS4 (200 aa).

The S4 RNA-binding domain maps to 92–155 (SRLDNLVYRM…RNLTVVKEAL (64 aa)).

Belongs to the universal ribosomal protein uS4 family. As to quaternary structure, part of the 30S ribosomal subunit. Contacts protein S5. The interaction surface between S4 and S5 is involved in control of translational fidelity.

Functionally, one of the primary rRNA binding proteins, it binds directly to 16S rRNA where it nucleates assembly of the body of the 30S subunit. With S5 and S12 plays an important role in translational accuracy. The chain is Small ribosomal subunit protein uS4 from Shouchella clausii (strain KSM-K16) (Alkalihalobacillus clausii).